The following is a 217-amino-acid chain: Probable transaldolase (217 aa).

The active-site Schiff-base intermediate with substrate is the Lys-83.

The protein belongs to the transaldolase family. Type 3B subfamily.

The protein resides in the cytoplasm. The catalysed reaction is D-sedoheptulose 7-phosphate + D-glyceraldehyde 3-phosphate = D-erythrose 4-phosphate + beta-D-fructose 6-phosphate. Its pathway is carbohydrate degradation; pentose phosphate pathway; D-glyceraldehyde 3-phosphate and beta-D-fructose 6-phosphate from D-ribose 5-phosphate and D-xylulose 5-phosphate (non-oxidative stage): step 2/3. Functionally, transaldolase is important for the balance of metabolites in the pentose-phosphate pathway. The protein is Probable transaldolase of Caldicellulosiruptor saccharolyticus (strain ATCC 43494 / DSM 8903 / Tp8T 6331).